We begin with the raw amino-acid sequence, 75 residues long: ATP synthase subunit c (75 aa).

2 helical membrane passes run 4–24 (GLIA…GLGQ) and 54–74 (AVAE…MFAF).

Belongs to the ATPase C chain family. As to quaternary structure, F-type ATPases have 2 components, F(1) - the catalytic core - and F(0) - the membrane proton channel. F(1) has five subunits: alpha(3), beta(3), gamma(1), delta(1), epsilon(1). F(0) has three main subunits: a(1), b(2) and c(10-14). The alpha and beta chains form an alternating ring which encloses part of the gamma chain. F(1) is attached to F(0) by a central stalk formed by the gamma and epsilon chains, while a peripheral stalk is formed by the delta and b chains.

The protein resides in the cell membrane. In terms of biological role, f(1)F(0) ATP synthase produces ATP from ADP in the presence of a proton or sodium gradient. F-type ATPases consist of two structural domains, F(1) containing the extramembraneous catalytic core and F(0) containing the membrane proton channel, linked together by a central stalk and a peripheral stalk. During catalysis, ATP synthesis in the catalytic domain of F(1) is coupled via a rotary mechanism of the central stalk subunits to proton translocation. Key component of the F(0) channel; it plays a direct role in translocation across the membrane. A homomeric c-ring of between 10-14 subunits forms the central stalk rotor element with the F(1) delta and epsilon subunits. This Mycoplasmopsis agalactiae (strain NCTC 10123 / CIP 59.7 / PG2) (Mycoplasma agalactiae) protein is ATP synthase subunit c.